The chain runs to 209 residues: Large ribosomal subunit protein bL25 (209 aa).

Positions 183–209 are disordered; the sequence is TAGERPAAEPAAAPGAAPAAGPEEAEE. Low complexity predominate over residues 184 to 209; it reads AGERPAAEPAAAPGAAPAAGPEEAEE.

The protein belongs to the bacterial ribosomal protein bL25 family. CTC subfamily. Part of the 50S ribosomal subunit; part of the 5S rRNA/L5/L18/L25 subcomplex. Contacts the 5S rRNA. Binds to the 5S rRNA independently of L5 and L18.

This is one of the proteins that binds to the 5S RNA in the ribosome where it forms part of the central protuberance. This chain is Large ribosomal subunit protein bL25, found in Pelotomaculum thermopropionicum (strain DSM 13744 / JCM 10971 / SI).